The primary structure comprises 257 residues: Small ribosomal subunit protein uS2 (257 aa).

Residues 237–257 (MDEADGSEAEPEDPAAPESAE) form a disordered region. Residues 240–257 (ADGSEAEPEDPAAPESAE) are compositionally biased toward acidic residues.

It belongs to the universal ribosomal protein uS2 family.

The sequence is that of Small ribosomal subunit protein uS2 from Chlorobium phaeovibrioides (strain DSM 265 / 1930) (Prosthecochloris vibrioformis (strain DSM 265)).